We begin with the raw amino-acid sequence, 247 residues long: TLC domain-containing protein 1 (247 aa).

The signal sequence occupies residues 1–35 (MPRLLHPALPLLLGATLTFRALRRALCRLPLPVHV). The Extracellular portion of the chain corresponds to 36–46 (RADPLRTWRWH). Residues 40-234 (LRTWRWHNLL…LLRSDFCPEH (195 aa)) enclose the TLC domain. Residues 47 to 67 (NLLVSFAHSIVSGIWALLCVW) form a helical membrane-spanning segment. Over 68-83 (QTPDMLVEIETAWSLS) the chain is Cytoplasmic. The helical transmembrane segment at 84–104 (GYLLVCFSAGYFIHDTVDIVA) threads the bilayer. Over 105-123 (SGQTRASWEYLVHHVMAMG) the chain is Extracellular. Positions 124-144 (AFFSGIFWSSFVGGGVLTLLV) form an intramembrane region, helical. At 145-173 (EVSNIFLTIRMMMKISNAQDHLLYRVNKY) the chain is on the extracellular side. The helical transmembrane segment at 174–194 (VNLVMYFLFRLAPQAYLTHFF) threads the bilayer. The Cytoplasmic segment spans residues 195 to 201 (LRYVNQR). The chain crosses the membrane as a helical span at residues 202-222 (TLGTFLLGILLMLDVMIIIYF). The Extracellular segment spans residues 223–247 (SRLLRSDFCPEHVPKKQHKDKFLTE).

The protein resides in the cell membrane. Its function is as follows. Regulates the composition and fluidity of the plasma membrane. Inhibits the incorporation of membrane-fluidizing phospholipids containing omega-3 long-chain polyunsaturated fatty acids (LCPUFA) and thereby promotes membrane rigidity. Does not appear to have any effect on LCPUFA synthesis. This Homo sapiens (Human) protein is TLC domain-containing protein 1 (TLCD1).